A 469-amino-acid chain; its full sequence is Aspartyl/glutamyl-tRNA(Asn/Gln) amidotransferase subunit B (469 aa).

It belongs to the GatB/GatE family. GatB subfamily. Heterotrimer of A, B and C subunits.

It carries out the reaction L-glutamyl-tRNA(Gln) + L-glutamine + ATP + H2O = L-glutaminyl-tRNA(Gln) + L-glutamate + ADP + phosphate + H(+). It catalyses the reaction L-aspartyl-tRNA(Asn) + L-glutamine + ATP + H2O = L-asparaginyl-tRNA(Asn) + L-glutamate + ADP + phosphate + 2 H(+). Its function is as follows. Allows the formation of correctly charged Asn-tRNA(Asn) or Gln-tRNA(Gln) through the transamidation of misacylated Asp-tRNA(Asn) or Glu-tRNA(Gln) in organisms which lack either or both of asparaginyl-tRNA or glutaminyl-tRNA synthetases. The reaction takes place in the presence of glutamine and ATP through an activated phospho-Asp-tRNA(Asn) or phospho-Glu-tRNA(Gln). The protein is Aspartyl/glutamyl-tRNA(Asn/Gln) amidotransferase subunit B of Methanococcus maripaludis (strain C7 / ATCC BAA-1331).